The primary structure comprises 361 residues: Phosphoserine aminotransferase (361 aa).

Residue arginine 43 coordinates L-glutamate. Residues 77 to 78, tryptophan 103, threonine 153, aspartate 173, and glutamine 196 each bind pyridoxal 5'-phosphate; that span reads AS. Lysine 197 carries the post-translational modification N6-(pyridoxal phosphate)lysine. Residue 238–239 coordinates pyridoxal 5'-phosphate; the sequence is NT.

Belongs to the class-V pyridoxal-phosphate-dependent aminotransferase family. SerC subfamily. In terms of assembly, homodimer. Pyridoxal 5'-phosphate is required as a cofactor.

It is found in the cytoplasm. The catalysed reaction is O-phospho-L-serine + 2-oxoglutarate = 3-phosphooxypyruvate + L-glutamate. The enzyme catalyses 4-(phosphooxy)-L-threonine + 2-oxoglutarate = (R)-3-hydroxy-2-oxo-4-phosphooxybutanoate + L-glutamate. It participates in amino-acid biosynthesis; L-serine biosynthesis; L-serine from 3-phospho-D-glycerate: step 2/3. It functions in the pathway cofactor biosynthesis; pyridoxine 5'-phosphate biosynthesis; pyridoxine 5'-phosphate from D-erythrose 4-phosphate: step 3/5. Its function is as follows. Catalyzes the reversible conversion of 3-phosphohydroxypyruvate to phosphoserine and of 3-hydroxy-2-oxo-4-phosphonooxybutanoate to phosphohydroxythreonine. In Pseudomonas putida (strain ATCC 47054 / DSM 6125 / CFBP 8728 / NCIMB 11950 / KT2440), this protein is Phosphoserine aminotransferase.